A 71-amino-acid polypeptide reads, in one-letter code: Small ribosomal subunit protein bS21 (71 aa).

It belongs to the bacterial ribosomal protein bS21 family.

The chain is Small ribosomal subunit protein bS21 from Acidithiobacillus ferrooxidans (strain ATCC 23270 / DSM 14882 / CIP 104768 / NCIMB 8455) (Ferrobacillus ferrooxidans (strain ATCC 23270)).